We begin with the raw amino-acid sequence, 76 residues long: UPF0235 protein MRA_1997 (76 aa).

This sequence belongs to the UPF0235 family.

In Mycobacterium tuberculosis (strain ATCC 25177 / H37Ra), this protein is UPF0235 protein MRA_1997.